Consider the following 157-residue polypeptide: Ribonuclease H (157 aa).

Residues 1-146 (MPELFAYTDG…ADALAREGMA (146 aa)) form the RNase H type-1 domain. 4 residues coordinate Mg(2+): Asp-9, Glu-52, Asp-74, and Asp-138.

The protein belongs to the RNase H family. In terms of assembly, monomer. It depends on Mg(2+) as a cofactor.

It is found in the cytoplasm. The enzyme catalyses Endonucleolytic cleavage to 5'-phosphomonoester.. Functionally, endonuclease that specifically degrades the RNA of RNA-DNA hybrids. The chain is Ribonuclease H from Dinoroseobacter shibae (strain DSM 16493 / NCIMB 14021 / DFL 12).